The following is a 90-amino-acid chain: Large ribosomal subunit protein eL34 (90 aa).

Residues C36, C39, C72, and C75 each contribute to the Zn(2+) site. The segment at 41 to 72 is disordered; that stretch reads RPLNGVPRGRPSELRKLPKTKKRPERPYPNLC.

Belongs to the eukaryotic ribosomal protein eL34 family. As to quaternary structure, part of the 50S ribosomal subunit. The cofactor is Zn(2+).

In Thermococcus kodakarensis (strain ATCC BAA-918 / JCM 12380 / KOD1) (Pyrococcus kodakaraensis (strain KOD1)), this protein is Large ribosomal subunit protein eL34.